Reading from the N-terminus, the 930-residue chain is Pyruvate dehydrogenase E1 component (930 aa).

Basic and acidic residues predominate over residues 1–10 (MTTDFARHDL). The tract at residues 1–21 (MTTDFARHDLAQNSNSASEPD) is disordered. K375 participates in a covalent cross-link: Isoglutamyl lysine isopeptide (Lys-Gln) (interchain with Q-Cter in protein Pup).

In terms of assembly, homodimer. Part of the PDH complex, consisting of multiple copies of AceE (E1), DlaT (E2) and Lpd (E3). It depends on Mg(2+) as a cofactor. Thiamine diphosphate is required as a cofactor.

The enzyme catalyses N(6)-[(R)-lipoyl]-L-lysyl-[protein] + pyruvate + H(+) = N(6)-[(R)-S(8)-acetyldihydrolipoyl]-L-lysyl-[protein] + CO2. Its function is as follows. Component of the pyruvate dehydrogenase (PDH) complex, that catalyzes the overall conversion of pyruvate to acetyl-CoA and CO(2). AceE has reductase activity with pyruvate but does not react with 2-oxoglutarate. This is Pyruvate dehydrogenase E1 component (aceE) from Mycobacterium tuberculosis (strain ATCC 25618 / H37Rv).